Here is a 273-residue protein sequence, read N- to C-terminus: Putative phosphoenolpyruvate synthase regulatory protein (273 aa).

Position 153 to 160 (153 to 160 (GVSRSGKT)) interacts with ADP.

It belongs to the pyruvate, phosphate/water dikinase regulatory protein family. PSRP subfamily.

It catalyses the reaction [pyruvate, water dikinase] + ADP = [pyruvate, water dikinase]-phosphate + AMP + H(+). It carries out the reaction [pyruvate, water dikinase]-phosphate + phosphate + H(+) = [pyruvate, water dikinase] + diphosphate. In terms of biological role, bifunctional serine/threonine kinase and phosphorylase involved in the regulation of the phosphoenolpyruvate synthase (PEPS) by catalyzing its phosphorylation/dephosphorylation. This chain is Putative phosphoenolpyruvate synthase regulatory protein, found in Leptothrix cholodnii (strain ATCC 51168 / LMG 8142 / SP-6) (Leptothrix discophora (strain SP-6)).